Consider the following 710-residue polypeptide: E3 ubiquitin-protein ligase TRIM9 (710 aa).

Residues 10 to 50 (CPVCGSFYREPIILPCSHNLCQACARNILVQTPESESPQSR) form an RING-type zinc finger. The residue at position 41 (threonine 41) is a Phosphothreonine. Phosphoserine is present on residues serine 44, serine 46, serine 49, and serine 53. 2 B box-type zinc fingers span residues 163–212 (AAAL…LVPP) and 224–266 (RKVS…VKAL). Zn(2+) contacts are provided by cysteine 168, cysteine 171, cysteine 193, histidine 198, cysteine 229, histidine 232, cysteine 252, and histidine 258. The stretch at 273 to 340 (HKSQLSQALN…KAQLLARVNK (68 aa)) forms a coiled coil. Positions 374–432 (IKENDPSGFLQISDALIRRVHLTEDQWGKGTLTPRMTTDFDLSLDNSPLLQSIHQLDFV) constitute a COS domain. Residues 440 to 535 (VPATPILQLE…KTLVLQTSEV (96 aa)) form the Fibronectin type-III domain. Residues 533 to 702 (SEVAWFAFDP…LHTGLPVPDF (170 aa)) form the B30.2/SPRY domain.

Interacts with SNAP25. Post-translationally, auto-ubiquitinated. Brain (at protein level). Expressed in fetal and adult brain.

It is found in the cytoplasmic vesicle. The protein localises to the secretory vesicle. Its subcellular location is the synaptic vesicle. It localises to the synapse. The protein resides in the cytoplasm. It is found in the cytoskeleton. The protein localises to the cell projection. Its subcellular location is the dendrite. The enzyme catalyses S-ubiquitinyl-[E2 ubiquitin-conjugating enzyme]-L-cysteine + [acceptor protein]-L-lysine = [E2 ubiquitin-conjugating enzyme]-L-cysteine + N(6)-ubiquitinyl-[acceptor protein]-L-lysine.. The protein operates within protein modification; protein ubiquitination. Its function is as follows. E3 ubiquitin-protein ligase which ubiquitinates itself in cooperation with an E2 enzyme UBE2D2/UBC4 and serves as a targeting signal for proteasomal degradation. May play a role in regulation of neuronal functions. May act as a regulator of synaptic vesicle exocytosis by controlling the availability of SNAP25 for the SNARE complex formation. The chain is E3 ubiquitin-protein ligase TRIM9 (Trim9) from Rattus norvegicus (Rat).